The following is a 681-amino-acid chain: 2-(S-pantetheinyl)-carbapenam-3-carboxylate methyltransferase (681 aa).

A B12-binding domain is found at 1–144 (MTVPAARSGR…IERLADHPDY (144 aa)). Asn-18, Ser-72, Tyr-74, Val-75, His-103, Gly-126, and Glu-127 together coordinate cob(II)alamin. Residues 192–417 (RDLRFYALWE…RLYVEEPGTP (226 aa)) form the Radical SAM core domain. Positions 206 and 210 each coordinate [4Fe-4S] cluster. Phe-212 contacts 5'-deoxyadenosine. Cys-213 serves as a coordination point for [4Fe-4S] cluster. Residues Asp-214 and Cys-249 each coordinate cob(II)alamin. Gln-312, Glu-349, and Gly-384 together coordinate 5'-deoxyadenosine.

The protein belongs to the methyltransferase superfamily. It depends on [4Fe-4S] cluster as a cofactor. Cob(II)alamin serves as cofactor.

It catalyses the reaction (2R,3R,5S)-2-(S-pantetheinyl)-carbapenam-3-carboxylate + AH2 + 2 S-adenosyl-L-methionine = (2R,3R,5S,6R)-6-(methyl)-2-(S-pantetheinyl)-carbapenam-3-carboxylate + 5'-deoxyadenosine + L-methionine + A + S-adenosyl-L-homocysteine + 2 H(+). The catalysed reaction is (2R,3R,5S,6R)-6-(methyl)-2-(S-pantetheinyl)-carbapenam-3-carboxylate + AH2 + 2 S-adenosyl-L-methionine = (2R,3R,5S,6R)-6-(ethyl)-2-(S-pantetheinyl)-carbapenam-3-carboxylate + 5'-deoxyadenosine + L-methionine + A + S-adenosyl-L-homocysteine + 2 H(+). Its pathway is antibiotic biosynthesis. Functionally, methyltransferase involved in the biosynthesis of the beta-lactam carbapenem antibiotic thienamycin. Catalyzes two consecutive S-adenosyl-L-methionine-dependent methylations to build out the C6-ethyl side chain in a stereocontrolled manner. In vitro can use methyl viologen and NADPH as the iron-sulfur cluster reductants. The polypeptide is 2-(S-pantetheinyl)-carbapenam-3-carboxylate methyltransferase (Streptantibioticus cattleyicolor (strain ATCC 35852 / DSM 46488 / JCM 4925 / NBRC 14057 / NRRL 8057) (Streptomyces cattleya)).